We begin with the raw amino-acid sequence, 453 residues long: tRNA modification GTPase MnmE (453 aa).

(6S)-5-formyl-5,6,7,8-tetrahydrofolate contacts are provided by Arg-22, Glu-79, and Lys-119. A TrmE-type G domain is found at 215-376 (GMKVVIAGRP…LKQHLKSLMG (162 aa)). Asn-225 contributes to the K(+) binding site. GTP-binding positions include 225–230 (NAGKSS), 244–250 (TEIAGTT), 269–272 (DTAG), and 334–337 (NKAD). Mg(2+) is bound at residue Ser-229. K(+) contacts are provided by Thr-244, Ile-246, and Thr-249. Thr-250 contributes to the Mg(2+) binding site. Lys-453 lines the (6S)-5-formyl-5,6,7,8-tetrahydrofolate pocket.

This sequence belongs to the TRAFAC class TrmE-Era-EngA-EngB-Septin-like GTPase superfamily. TrmE GTPase family. Homodimer. Heterotetramer of two MnmE and two MnmG subunits. K(+) is required as a cofactor.

The protein resides in the cytoplasm. In terms of biological role, exhibits a very high intrinsic GTPase hydrolysis rate. Involved in the addition of a carboxymethylaminomethyl (cmnm) group at the wobble position (U34) of certain tRNAs, forming tRNA-cmnm(5)s(2)U34. This Shewanella sp. (strain MR-7) protein is tRNA modification GTPase MnmE.